Here is a 295-residue protein sequence, read N- to C-terminus: Alpha-ketoglutarate-dependent dioxygenase alkB homolog 3 (295 aa).

Residues 1–48 are disordered; sequence MGDKRQRARVQGAWATPTKSQSAARPATPARSRPSQTPGPSWRSKEQQ. The span at 22 to 35 shows a compositional bias: low complexity; it reads SAARPATPARSRPS. Residues W115 and 141 to 143 contribute to the substrate site; that span reads YTY. The Fe2OG dioxygenase domain occupies 172 to 278; sequence TFNSLLCNFY…RVNLTFRTVY (107 aa). L177 carries the (4R)-5-hydroxyleucine; alternate modification. The residue at position 177 (L177) is a (4R)-5-oxoleucine; alternate. Residue 179–181 participates in 2-oxoglutarate binding; the sequence is NFY. Fe cation contacts are provided by H191 and D193. D194 contacts substrate. Position 257 (H257) interacts with Fe cation. 2-oxoglutarate-binding positions include 269-275 and R275; that span reads RVNLTFR.

It belongs to the alkB family. As to quaternary structure, interacts with the ASCC complex composed of ASCC1, ASCC2 and ASCC3. Interacts directly with ASCC3, and is thereby recruited to the ASCC complex. Interacts with OTUD4; the interaction is direct. Interacts with USP7 and USP9X. It depends on Fe(2+) as a cofactor. Post-translationally, ubiquitinated; undergoes 'Lys-48'-linked polyubiquitination. OTUD4 promotes USP7 and USP9X-dependent deubiquitination of 'Lys-48'-polyubiquitinated ALKBH3 promoting the repair of alkylated DNA lesions.

The protein localises to the nucleus. It localises to the cytoplasm. It carries out the reaction an N(1)-methyladenosine in mRNA + 2-oxoglutarate + O2 = an adenosine in mRNA + formaldehyde + succinate + CO2. The enzyme catalyses a methylated nucleobase within DNA + 2-oxoglutarate + O2 = a nucleobase within DNA + formaldehyde + succinate + CO2. It catalyses the reaction an N(1)-methyl-2'-deoxyadenosine in single-stranded DNA + 2-oxoglutarate + O2 = a 2'-deoxyadenosine in single-stranded DNA + formaldehyde + succinate + CO2 + H(+). The catalysed reaction is an N(3)-methyl-2'-deoxycytidine in single-stranded DNA + 2-oxoglutarate + O2 = a 2'-deoxycytidine in single-stranded DNA + formaldehyde + succinate + CO2 + H(+). It carries out the reaction a 3,N(4)-etheno-2'-deoxycytidine in single-stranded DNA + 2-oxoglutarate + O2 + H2O = a 2'-deoxycytidine in single-stranded DNA + glyoxal + succinate + CO2. Activated by ascorbate. In terms of biological role, dioxygenase that mediates demethylation of DNA and RNA containing 1-methyladenosine (m1A). Repairs alkylated DNA containing 1-methyladenosine (m1A) and 3-methylcytosine (m3C) by oxidative demethylation. Has a strong preference for single-stranded DNA. Able to process alkylated m3C within double-stranded regions via its interaction with ASCC3, which promotes DNA unwinding to generate single-stranded substrate needed for ALKBH3. Can repair exocyclic 3,N4-ethenocytosine adducs in single-stranded DNA. Also acts on RNA. Demethylates N(1)-methyladenosine (m1A) RNA, an epigenetic internal modification of messenger RNAs (mRNAs) highly enriched within 5'-untranslated regions (UTRs) and in the vicinity of start codons. Requires molecular oxygen, alpha-ketoglutarate and iron. The protein is Alpha-ketoglutarate-dependent dioxygenase alkB homolog 3 of Rattus norvegicus (Rat).